The sequence spans 369 residues: MRPMTFIVGLKTLWILAFSSLSNTLAVNNSGRWWGVVNVVTSTNLLTDTKNVQLVLDPSLQLLSRKQRKLIRQNPGILHSINSGLQSAMKECKWQFRSRRWNCPTTGGDNIFGKIVNKGCRETAFIFAITSAGVTHSVARSCSEGSIESCTCDYRRRGPGGTDWHWGGCSDNIDFGRVFGREFVDSSERGRDLRYLMNRHNNEAGRMTVFSEMKQECKCHGMSGSCAVRTCWMRLPTFRAVGDFLKDRFDGASRVIYGNKGSNRASRVQTHHLEPENPTHKPPSPQDLVYFEKSPNFCTYNGKTGTSGTSGRVCNSSSLGLDGCELLCCGRGYRTKTQRVTERCHCTFHWCCHVSCLNCTNTQVLHECL.

Positions 1–19 (MRPMTFIVGLKTLWILAFS) are cleaved as a signal peptide. Asn28 is a glycosylation site (N-linked (GlcNAc...) asparagine). Intrachain disulfides connect Cys92-Cys103, Cys142-Cys150, Cys152-Cys169, Cys217-Cys231, and Cys219-Cys226. Ser223 carries O-palmitoleoyl serine; by PORCN lipidation. The segment at 263–285 (NRASRVQTHHLEPENPTHKPPSP) is disordered. 6 cysteine pairs are disulfide-bonded: Cys298–Cys329, Cys314–Cys324, Cys328–Cys368, Cys344–Cys359, Cys346–Cys356, and Cys351–Cys352. Asn315 is a glycosylation site (N-linked (GlcNAc...) asparagine). Asn358 carries N-linked (GlcNAc...) asparagine glycosylation.

It belongs to the Wnt family. In terms of processing, palmitoleoylation is required for efficient binding to frizzled receptors. Palmitoleoylation is necessary for proper trafficking to cell surface. Depalmitoleoylated by NOTUM, leading to inhibit Wnt signaling pathway.

The protein resides in the secreted. It localises to the extracellular space. The protein localises to the extracellular matrix. In terms of biological role, ligand for members of the frizzled family of seven transmembrane receptors. Acts in the canonical Wnt signaling pathway by promoting beta-catenin-dependent transcriptional activation. Plays an essential role in the development of the embryonic brain and central nervous system (CNS). Has a role in osteoblast function, bone development and bone homeostasis. The protein is Protein Wnt-1 (WNT-1) of Ambystoma mexicanum (Axolotl).